Here is a 157-residue protein sequence, read N- to C-terminus: ENGEVDLDIQEVIMHPNYSKSSSDNDIALLRLARPATFSQTIVPICLPDSGLSERELTQAGQETVVTGWGYRSETKRNRTFVLNFIKVPVVPHSECVRTMHNLVSENMLCAGILGDTRDACEGDSGGPMVASFRGTWFLVGLVSWGEGCGRLHNYGV.

One can recognise a Peptidase S1 domain in the interval 1 to 157; it reads ENGEVDLDIQ…GCGRLHNYGV (157 aa). N-linked (GlcNAc...) asparagine glycosylation occurs at N17. The active-site Charge relay system is the D26. A glycan (N-linked (GlcNAc...) asparagine) is linked at N78. 2 disulfides stabilise this stretch: C96/C110 and C121/C149. S125 (charge relay system) is an active-site residue.

It belongs to the peptidase S1 family. Plasma; synthesized in the liver.

The protein resides in the secreted. The protein localises to the golgi apparatus. It localises to the endoplasmic reticulum. The enzyme catalyses Degradation of blood coagulation factors Va and VIIIa.. Its function is as follows. Protein C is a vitamin K-dependent serine protease that regulates blood coagulation by inactivating factors Va and VIIIa in the presence of calcium ions and phospholipids. Exerts a protective effect on the endothelial cell barrier function. This is Vitamin K-dependent protein C (PROC) from Equus caballus (Horse).